We begin with the raw amino-acid sequence, 675 residues long: Secretogranin-1 (675 aa).

Residues 1 to 20 (MQRAMLLGLLGAAALAAVIS) form the signal peptide. Cysteine 36 and cysteine 57 are disulfide-bonded. Positions 64-90 (SGKEVKGEEKGENENSKFEVRLLRDPS) are enriched in basic and acidic residues. Disordered stretches follow at residues 64–507 (SGKE…YPTT) and 528–555 (NSDF…VTMT). Phosphoserine is present on residues serine 93, serine 99, serine 100, serine 129, and serine 147. Serine 93 carries O-linked (Xyl...) (chondroitin sulfate) serine glycosylation. Basic and acidic residues-rich tracts occupy residues 148–161 (KEAK…RGGK) and 168–248 (GKIY…KPQE). Position 190 is a phosphoserine (serine 190). The O-linked (Xyl...) (chondroitin sulfate) serine glycan is linked to serine 236. Acidic residues predominate over residues 250–269 (PDQDQSEEESEEGEEGEEGA). Serine 255, serine 259, serine 291, serine 309, and serine 333 each carry phosphoserine. The segment covering 292-311 (YEGRRPLSEERKHAAGESKD) has biased composition (basic and acidic residues). Tyrosine 339 is subject to Sulfotyrosine. 2 stretches are compositionally biased toward basic and acidic residues: residues 361 to 410 (GSEE…EGAK) and 429 to 452 (SRQE…DTAK). Phosphoserine is present on residues serine 362, serine 372, serine 375, and serine 397. Tyrosine 469 is modified (sulfotyrosine). Serine 490, serine 529, and serine 540 each carry phosphoserine. Tyrosine 563 carries the sulfotyrosine modification. Residues 620–646 (DFYDSEEQMGPHQEAEDEKDRADQRVL) form a disordered region. Tyrosine 622 carries the post-translational modification Sulfotyrosine; partial. The residue at position 624 (serine 624) is a Phosphoserine. A compositionally biased stretch (basic and acidic residues) spans 637–646 (EKDRADQRVL). Arginine 674 carries the arginine amide; in CCB peptide short form modification.

This sequence belongs to the chromogranin/secretogranin protein family. In terms of assembly, interacts with ITPR1 in the secretory granules. Post-translationally, extensively processed in glucagonoma tissue by limited proteolysis at conserved basic residues. Alternative processing are seen in different tissues. The proglucagon-converting enzymes present in transformed alpha-cells are likely candidates to be involved in tissue-specific processing. In terms of tissue distribution, expressed in the brain, adrenal medulla and anterior pituitary. In the brain, localized to the hippocampal formation, the endocrine hypothalamus, the olfactory system, and in anatomically distinct structures in the pons-medulla.

It localises to the secreted. In terms of biological role, secretogranin-1 is a neuroendocrine secretory granule protein, which may be the precursor for other biologically active peptides. In Rattus norvegicus (Rat), this protein is Secretogranin-1 (Chgb).